Here is a 364-residue protein sequence, read N- to C-terminus: Chorismate synthase (364 aa).

A disordered region spans residues 41–60 (MQHDLDRRRPGTSRYTTARR). Residues Arg-48 and Arg-54 each contribute to the NADP(+) site. Residues 125 to 127 (RSS), 238 to 239 (NA), Gly-278, 293 to 297 (KPTSS), and Arg-319 each bind FMN.

This sequence belongs to the chorismate synthase family. In terms of assembly, homotetramer. The cofactor is FMNH2.

It carries out the reaction 5-O-(1-carboxyvinyl)-3-phosphoshikimate = chorismate + phosphate. It functions in the pathway metabolic intermediate biosynthesis; chorismate biosynthesis; chorismate from D-erythrose 4-phosphate and phosphoenolpyruvate: step 7/7. Catalyzes the anti-1,4-elimination of the C-3 phosphate and the C-6 proR hydrogen from 5-enolpyruvylshikimate-3-phosphate (EPSP) to yield chorismate, which is the branch point compound that serves as the starting substrate for the three terminal pathways of aromatic amino acid biosynthesis. This reaction introduces a second double bond into the aromatic ring system. The protein is Chorismate synthase of Shewanella sp. (strain MR-4).